A 352-amino-acid polypeptide reads, in one-letter code: Biotin synthase (352 aa).

Positions 44-262 constitute a Radical SAM core domain; it reads NRVQVSTLLS…LAVARIMMPK (219 aa). Cys59, Cys63, and Cys66 together coordinate [4Fe-4S] cluster. Positions 103, 134, 194, and 266 each coordinate [2Fe-2S] cluster.

It belongs to the radical SAM superfamily. Biotin synthase family. In terms of assembly, homodimer. Requires [4Fe-4S] cluster as cofactor. [2Fe-2S] cluster serves as cofactor.

The catalysed reaction is (4R,5S)-dethiobiotin + (sulfur carrier)-SH + 2 reduced [2Fe-2S]-[ferredoxin] + 2 S-adenosyl-L-methionine = (sulfur carrier)-H + biotin + 2 5'-deoxyadenosine + 2 L-methionine + 2 oxidized [2Fe-2S]-[ferredoxin]. The protein operates within cofactor biosynthesis; biotin biosynthesis; biotin from 7,8-diaminononanoate: step 2/2. Catalyzes the conversion of dethiobiotin (DTB) to biotin by the insertion of a sulfur atom into dethiobiotin via a radical-based mechanism. This Pseudomonas paraeruginosa (strain DSM 24068 / PA7) (Pseudomonas aeruginosa (strain PA7)) protein is Biotin synthase.